The following is a 396-amino-acid chain: MDKLLRRVRMAEGMVARRAQRKNALLKRITERKQNKKNGEAFTEAIQQRKAAVEARNEDWMLGPLAPRRELDEITLSNGNFFGSLSPTRALLESEVSEEERKARVAWCGSPKFLCIAPGDRVVVIEGHHKDLIGTIEKLNTRNMTVEIQSEKLKTNTTVPQFMQNDADKPVTQIYARLPISSVRLVHPLKDPQTGEYRDVIIRELRPRNIVHDRPTRTRSMRRFVPGENIIIPWPKQEPIKREDQPADTLRIDVDEKTFVPTLFRPPAPQQVLDELRNKYSIFRTRHTPEYIAKKEQEEQEKEAKKSAAKAMLTPVQEYNRKQRELRRARGQPALTEEMLAKIGEVVARNKLGHHQAPKVKEETVAQIEKAVEQLSLGGGQEDAATTTSPEQPKVV.

Residues 374–396 form a disordered region; it reads QLSLGGGQEDAATTTSPEQPKVV. Over residues 384–396 the composition is skewed to polar residues; the sequence is AATTTSPEQPKVV.

The protein belongs to the universal ribosomal protein uL24 family. In terms of assembly, component of the mitochondrial large ribosomal subunit (mt-LSU). Mature N.crassa 74S mitochondrial ribosomes consist of a small (37S) and a large (54S) subunit. The 37S small subunit contains a 16S ribosomal RNA (16S mt-rRNA) and 32 different proteins. The 54S large subunit contains a 23S rRNA (23S mt-rRNA) and 42 different proteins. uL24m forms the wall of the exit tunnel.

It is found in the mitochondrion. Functionally, component of the mitochondrial ribosome (mitoribosome), a dedicated translation machinery responsible for the synthesis of mitochondrial genome-encoded proteins, including at least some of the essential transmembrane subunits of the mitochondrial respiratory chain. The mitoribosomes are attached to the mitochondrial inner membrane and translation products are cotranslationally integrated into the membrane. In Neurospora crassa (strain ATCC 24698 / 74-OR23-1A / CBS 708.71 / DSM 1257 / FGSC 987), this protein is Large ribosomal subunit protein uL24m (mrpl40).